Consider the following 265-residue polypeptide: MEIRQNVKFKKPLIHYITNPISINDCANMILAAGAKPIMAEHPLEVSEITSASKSLGVNIGNITDNKMKSMLISGKTAYENKIPQVIDLVGVGCSKLRLDYAKKFISECHPNVIKGNMSEIKAIYGIKSSAKGIDVGACDIITEQNFDENIEMIKRLSMETGSVVAATGVVDIISNGTYTYIISNGCEMLSMITGTGCMLTGIIASYISSGNILEGTALAIVLMGICGELSQHVKGTGSFRNELIDNIFSISDDIIIKKIRINSY.

Residue methionine 39 coordinates substrate. ATP-binding residues include lysine 115 and threonine 168. Glycine 195 contacts substrate.

Belongs to the Thz kinase family. Mg(2+) serves as cofactor.

It carries out the reaction 5-(2-hydroxyethyl)-4-methylthiazole + ATP = 4-methyl-5-(2-phosphooxyethyl)-thiazole + ADP + H(+). The protein operates within cofactor biosynthesis; thiamine diphosphate biosynthesis; 4-methyl-5-(2-phosphoethyl)-thiazole from 5-(2-hydroxyethyl)-4-methylthiazole: step 1/1. In terms of biological role, catalyzes the phosphorylation of the hydroxyl group of 4-methyl-5-beta-hydroxyethylthiazole (THZ). This chain is Hydroxyethylthiazole kinase 2, found in Clostridium botulinum (strain Langeland / NCTC 10281 / Type F).